A 79-amino-acid chain; its full sequence is Omega-phylotoxin-To1a (79 aa).

An N-terminal signal peptide occupies residues 1–21; sequence MKKTFCFILILVCIVLKSVNA. A propeptide spanning residues 22–38 is cleaved from the precursor; sequence EEEDNFEESSLEMETAR. 4 disulfides stabilise this stretch: C39–C59, C46–C63, C58–C78, and C65–C76.

Expressed by the venom duct.

It is found in the secreted. Its function is as follows. Insect-specific toxin that probably acts as an inhibitor of presynaptic insect calcium channels, presumably Cav2 subtype. In vivo, induces immediate paralysis on insects, followed by death when high doses are injected. The protein is Omega-phylotoxin-To1a of Tibellus oblongus (Oblong running crab spider).